The chain runs to 389 residues: Anhydro-N-acetylmuramic acid kinase (389 aa).

Position 11–18 (11–18) interacts with ATP; it reads GTSLDGVD.

This sequence belongs to the anhydro-N-acetylmuramic acid kinase family.

It catalyses the reaction 1,6-anhydro-N-acetyl-beta-muramate + ATP + H2O = N-acetyl-D-muramate 6-phosphate + ADP + H(+). It functions in the pathway amino-sugar metabolism; 1,6-anhydro-N-acetylmuramate degradation. The protein operates within cell wall biogenesis; peptidoglycan recycling. Functionally, catalyzes the specific phosphorylation of 1,6-anhydro-N-acetylmuramic acid (anhMurNAc) with the simultaneous cleavage of the 1,6-anhydro ring, generating MurNAc-6-P. Is required for the utilization of anhMurNAc either imported from the medium or derived from its own cell wall murein, and thus plays a role in cell wall recycling. The polypeptide is Anhydro-N-acetylmuramic acid kinase (Albidiferax ferrireducens (strain ATCC BAA-621 / DSM 15236 / T118) (Rhodoferax ferrireducens)).